Reading from the N-terminus, the 69-residue chain is UPF0337 protein RB0906 (69 aa).

It belongs to the UPF0337 (CsbD) family.

The protein is UPF0337 protein RB0906 of Rhizobium meliloti (strain 1021) (Ensifer meliloti).